Reading from the N-terminus, the 831-residue chain is Multiphosphoryl transfer protein 1 (831 aa).

Residues 1-90 form the HPr domain; the sequence is MLTIQFLCPL…EYIQVRFIDS (90 aa). Catalysis depends on H15, which acts as the Pros-phosphohistidine intermediate; for HPr activity. Position 15 is a phosphohistidine; by EI (H15). The segment at 119-650 is PTS EI; the sequence is GNVLASGVGV…AVKSQLRQLD (532 aa). Catalysis depends on H298, which acts as the Tele-phosphohistidine intermediate; for PTS EI activity. H298 is modified (phosphohistidine; by autocatalysis). 2 residues coordinate phosphoenolpyruvate: R405 and R441. The Mg(2+) site is built by E540 and D564. Phosphoenolpyruvate is bound by residues 563–564 and R574; that span reads ND. Residue C611 is the Proton donor; for EI activity of the active site. Residues 685–828 enclose the PTS EIIA type-2 domain; that stretch reads PLLALENIFV…QSILTLLETE (144 aa). Residue H747 is the Tele-phosphohistidine intermediate; for PTS EIIA activity of the active site. A Phosphohistidine; by HPr modification is found at H747.

It belongs to the PEP-utilizing enzyme family. Mg(2+) serves as cofactor.

It is found in the cytoplasm. The catalysed reaction is L-histidyl-[protein] + phosphoenolpyruvate = N(pros)-phospho-L-histidyl-[protein] + pyruvate. The enzyme catalyses D-fructose(out) + N(pros)-phospho-L-histidyl-[protein] = D-fructose 1-phosphate(in) + L-histidyl-[protein]. In terms of biological role, multifunctional protein that includes general (non sugar-specific) and sugar-specific components of the phosphoenolpyruvate-dependent sugar phosphotransferase system (sugar PTS). This major carbohydrate active transport system catalyzes the phosphorylation of incoming sugar substrates concomitantly with their translocation across the cell membrane. The enzyme II FryABC PTS system is involved in fructose transport. This is Multiphosphoryl transfer protein 1 (fryA) from Escherichia coli (strain K12).